We begin with the raw amino-acid sequence, 300 residues long: Acetylglutamate kinase (300 aa).

Substrate contacts are provided by residues 67–68, R89, and N194; that span reads GG.

This sequence belongs to the acetylglutamate kinase family. ArgB subfamily.

The protein resides in the cytoplasm. It carries out the reaction N-acetyl-L-glutamate + ATP = N-acetyl-L-glutamyl 5-phosphate + ADP. It functions in the pathway amino-acid biosynthesis; L-arginine biosynthesis; N(2)-acetyl-L-ornithine from L-glutamate: step 2/4. In terms of biological role, catalyzes the ATP-dependent phosphorylation of N-acetyl-L-glutamate. This is Acetylglutamate kinase from Saccharophagus degradans (strain 2-40 / ATCC 43961 / DSM 17024).